Consider the following 232-residue polypeptide: Large ribosomal subunit protein uL1 (232 aa).

Belongs to the universal ribosomal protein uL1 family. As to quaternary structure, part of the 50S ribosomal subunit.

Binds directly to 23S rRNA. The L1 stalk is quite mobile in the ribosome, and is involved in E site tRNA release. In terms of biological role, protein L1 is also a translational repressor protein, it controls the translation of the L11 operon by binding to its mRNA. The polypeptide is Large ribosomal subunit protein uL1 (Paraburkholderia phymatum (strain DSM 17167 / CIP 108236 / LMG 21445 / STM815) (Burkholderia phymatum)).